A 198-amino-acid chain; its full sequence is Phage-like element PBSX protein XkdA (198 aa).

It to B.subtilis YqaB.

This Bacillus subtilis (strain 168) protein is Phage-like element PBSX protein XkdA (xkdA).